We begin with the raw amino-acid sequence, 122 residues long: Large ribosomal subunit protein uL14 (122 aa).

Belongs to the universal ribosomal protein uL14 family. Part of the 50S ribosomal subunit. Forms a cluster with proteins L3 and L19. In the 70S ribosome, L14 and L19 interact and together make contacts with the 16S rRNA in bridges B5 and B8.

In terms of biological role, binds to 23S rRNA. Forms part of two intersubunit bridges in the 70S ribosome. The protein is Large ribosomal subunit protein uL14 of Moorella thermoacetica (strain ATCC 39073 / JCM 9320).